A 101-amino-acid polypeptide reads, in one-letter code: Urease subunit beta (101 aa).

Belongs to the urease beta subunit family. In terms of assembly, heterotrimer of UreA (gamma), UreB (beta) and UreC (alpha) subunits. Three heterotrimers associate to form the active enzyme.

The protein localises to the cytoplasm. It carries out the reaction urea + 2 H2O + H(+) = hydrogencarbonate + 2 NH4(+). Its pathway is nitrogen metabolism; urea degradation; CO(2) and NH(3) from urea (urease route): step 1/1. The polypeptide is Urease subunit beta (Polaromonas naphthalenivorans (strain CJ2)).